A 454-amino-acid chain; its full sequence is Protection of telomeres protein 1b (454 aa).

The protein belongs to the telombin family. Interacts with TRB1, TRB2 and TRB3. Expressed at low levels in roots, rosette leaves, cauline leaves, stems and flowers.

The protein resides in the nucleus. The protein localises to the chromosome. It localises to the telomere. Its function is as follows. Negatively regulates telomerase activity and participates in chromosome end protection. Binds RNA non-specifically. Associates with a regulatory Pol III-dependent lncRNA, which represses telomerase activity in response to DNA damage. Binds single-stranded telomeric DNA with weak affinity. The polypeptide is Protection of telomeres protein 1b (Arabidopsis thaliana (Mouse-ear cress)).